Reading from the N-terminus, the 1106-residue chain is Probable LRR receptor-like serine/threonine-protein kinase At1g74360 (1106 aa).

The signal sequence occupies residues 1–34 (MTMVTRVIMTDDDSQSLCFLCFLLFFFITAIAVA). Topologically, residues 35 to 736 (GDSLDSDREV…PRTLLLIWIS (702 aa)) are extracellular. LRR repeat units follow at residues 86-109 (RSRV…NFSA), 110-134 (LTEL…LSRC), 136-156 (NLKH…LPGL), 157-182 (SNLE…LFCN), 184-204 (LVVA…IFNG), 205-226 (CRNL…WTGF), and 227-250 (GRLV…MFRG). N-linked (GlcNAc...) asparagine glycosylation is found at Asn93 and Asn106. N-linked (GlcNAc...) asparagine glycosylation is present at Asn141. N-linked (GlcNAc...) asparagine glycans are attached at residues Asn188 and Asn193. 2 N-linked (GlcNAc...) asparagine glycosylation sites follow: Asn242 and Asn251. LRR repeat units lie at residues 252 to 275 (CTLQ…VSNC), 276 to 299 (QNLN…IGSI), 300 to 323 (SSLK…LLNL), 325 to 346 (NLVF…IFGR), 348 to 371 (TQVK…NILK), 372 to 396 (LPNL…ISQI), 398 to 419 (SLKF…EYGN), 420 to 443 (MPGL…SFGK), 445 to 468 (TSLL…IGNC), 470 to 492 (SLLW…LTRM), 566 to 593 (VRTL…ISQM), 594 to 617 (DRLS…IGQL), 619 to 640 (LAFL…IGNL), 641 to 664 (KCLQ…LNDL), and 666 to 690 (ELSK…QVAT). 2 N-linked (GlcNAc...) asparagine glycosylation sites follow: Asn309 and Asn322. N-linked (GlcNAc...) asparagine glycosylation is found at Asn365, Asn374, Asn384, and Asn408. 2 N-linked (GlcNAc...) asparagine glycosylation sites follow: Asn454 and Asn467. N-linked (GlcNAc...) asparagine glycans are attached at residues Asn623, Asn628, Asn652, Asn671, Asn709, and Asn713. A helical membrane pass occupies residues 737-757 (LALALAFIACLVVSGIVLMVV). Topologically, residues 758–1106 (KASREAEIDL…GLSSQGYIEM (349 aa)) are cytoplasmic. A phosphothreonine mark is found at Thr803 and Thr811. A Protein kinase domain is found at 814–1095 (FSEERVVGRG…VKISGKAELF (282 aa)). ATP contacts are provided by residues 820–828 (VGRGGYGTV) and Lys842. Residue Asp941 is the Proton acceptor of the active site. Tyr983 carries the phosphotyrosine modification. The residue at position 991 (Thr991) is a Phosphothreonine.

This sequence belongs to the protein kinase superfamily. Ser/Thr protein kinase family.

It is found in the mitochondrion membrane. It carries out the reaction L-seryl-[protein] + ATP = O-phospho-L-seryl-[protein] + ADP + H(+). The catalysed reaction is L-threonyl-[protein] + ATP = O-phospho-L-threonyl-[protein] + ADP + H(+). This chain is Probable LRR receptor-like serine/threonine-protein kinase At1g74360, found in Arabidopsis thaliana (Mouse-ear cress).